A 519-amino-acid chain; its full sequence is uncharacterized protein (519 aa).

Helical transmembrane passes span 52 to 72 (IYFLILLYLIQGVPMGLVRGS), 86 to 106 (LATYSLAAYPYSLKVLWSPIV), 119 to 139 (TWVVPCMLLISSTLLLFSYNV), 156 to 176 (WSFLLVFVCATQDIAVDGWSL), 199 to 219 (FFLSFTILLVFTSPEFANTFI), 231 to 251 (LSGYIKFWAYFTFIASVLVCF), 313 to 333 (MLSLIILINFPLGLALGVYTG), 343 to 363 (IWLKGYWGRVVSILLNTILVY), 374 to 394 (VFFPIFLCYTLNASFSTIQFV), 408 to 430 (IGGTYMTILNTLSNLGGSWPQYV), and 477 to 497 (TSIVGIFLAISICVSLITPVV).

The protein resides in the membrane. This is an uncharacterized protein from Schizosaccharomyces pombe (strain 972 / ATCC 24843) (Fission yeast).